Consider the following 521-residue polypeptide: Glycogen synthase (521 aa).

An ADP-alpha-D-glucose-binding site is contributed by Lys18.

It belongs to the glycosyltransferase 1 family. Bacterial/plant glycogen synthase subfamily.

The enzyme catalyses [(1-&gt;4)-alpha-D-glucosyl](n) + ADP-alpha-D-glucose = [(1-&gt;4)-alpha-D-glucosyl](n+1) + ADP + H(+). It participates in glycan biosynthesis; glycogen biosynthesis. Functionally, synthesizes alpha-1,4-glucan chains using ADP-glucose. The polypeptide is Glycogen synthase (Bordetella petrii (strain ATCC BAA-461 / DSM 12804 / CCUG 43448)).